We begin with the raw amino-acid sequence, 208 residues long: Uracil phosphoribosyltransferase (208 aa).

Residues R77, R102, and 129-137 each bind 5-phospho-alpha-D-ribose 1-diphosphate; that span reads DPMLATGNS. Uracil is bound by residues I193 and 198–200; that span reads GDA. D199 is a binding site for 5-phospho-alpha-D-ribose 1-diphosphate.

This sequence belongs to the UPRTase family. It depends on Mg(2+) as a cofactor.

The catalysed reaction is UMP + diphosphate = 5-phospho-alpha-D-ribose 1-diphosphate + uracil. It functions in the pathway pyrimidine metabolism; UMP biosynthesis via salvage pathway; UMP from uracil: step 1/1. Its activity is regulated as follows. Allosterically activated by GTP. In terms of biological role, catalyzes the conversion of uracil and 5-phospho-alpha-D-ribose 1-diphosphate (PRPP) to UMP and diphosphate. This Mycoplasmopsis pulmonis (strain UAB CTIP) (Mycoplasma pulmonis) protein is Uracil phosphoribosyltransferase.